Here is a 520-residue protein sequence, read N- to C-terminus: Cytochrome P450 315a1, mitochondrial (520 aa).

Cysteine 466 is a binding site for heme.

The protein belongs to the cytochrome P450 family. It depends on heme as a cofactor. As to expression, complex coexpression pattern of dib (disembodied) and sad (shade) in the early embryo that restricts to the prothoracic gland cells of the developing ring gland during late embryogenesis. In larvae and adult, coexpression is seen in prothoracic gland and follicle cells of the ovary. In adults, coexpression is seen in the follicle cells, sad only is expressed in nurse cells.

The protein resides in the mitochondrion membrane. It catalyses the reaction 2-deoxyecdysone + 2 reduced [adrenodoxin] + O2 + 2 H(+) = ecdysone + 2 oxidized [adrenodoxin] + H2O. The enzyme catalyses 2,22-dideoxyecdysone + 2 reduced [adrenodoxin] + O2 + 2 H(+) = 22-deoxyecdysone + 2 oxidized [adrenodoxin] + H2O. It functions in the pathway steroid biosynthesis; ecdysteroid biosynthesis. In terms of biological role, required for CNS development: midline glial cells. Involved in the metabolism of insect hormones: responsible for ecdysteroid C2-hydroxylase activity. May be involved in the breakdown of synthetic insecticides. This Drosophila melanogaster (Fruit fly) protein is Cytochrome P450 315a1, mitochondrial.